A 693-amino-acid chain; its full sequence is CREB-regulated transcription coactivator 2 (693 aa).

A compositionally biased stretch (polar residues) spans 1 to 20 (MATSGANGPGSATASASNPR). Residues 1 to 30 (MATSGANGPGSATASASNPRKFSEKIALQK) form a disordered region. Ala-2 carries the N-acetylalanine modification. Asymmetric dimethylarginine; by PRMT6 is present on Arg-51. Phosphoserine occurs at positions 70, 86, and 90. Arg-99, Arg-120, and Arg-123 each carry asymmetric dimethylarginine; by PRMT6. Ser-136 is subject to Phosphoserine. Asymmetric dimethylarginine; by PRMT6 is present on residues Arg-161 and Arg-168. A Phosphothreonine modification is found at Thr-169. Phosphoserine; by AMPK, MARK2, SIK1 and SIK2 is present on Ser-171. Thr-192 is modified (phosphothreonine). Residue Lys-234 forms a Glycyl lysine isopeptide (Lys-Gly) (interchain with G-Cter in SUMO2) linkage. The Nuclear export signal motif lies at 271-287 (TGGSLPDLTNLHFPPPL). A Phosphoserine; by MARK2 modification is found at Ser-274. Disordered stretches follow at residues 282–306 (HFPP…GGNS) and 328–554 (GYDA…MSDF). 5 positions are modified to phosphoserine: Ser-306, Ser-368, Ser-393, Ser-433, and Ser-456. 2 stretches are compositionally biased toward low complexity: residues 331-378 (APGL…SSLA) and 386-415 (SLGH…GAPS). Residues 447–468 (SQQQLPKQFSPTMSPTLSSITQ) are compositionally biased toward polar residues. Tyr-488 is modified (phosphotyrosine). Phosphoserine occurs at positions 489, 490, and 492. Positions 498 to 507 (QPHTPKSLQQ) are enriched in polar residues. Thr-501 bears the Phosphothreonine mark. Residues 509 to 529 (GLPSQSCSVQSSGGQPPGRQS) show a composition bias toward low complexity. A phosphoserine mark is found at Ser-613, Ser-623, and Ser-624.

Belongs to the TORC family. In terms of assembly, binds, as a tetramer, through its N-terminal region, with the bZIP domain of CREB1. 'Arg-314' in the bZIP domain of CREB1 is essential for this interaction. Interaction, via its C-terminal, with TAF4, enhances recruitment of TAF4 to CREB1. Interacts with SIK2. Interacts with 14-3-3 proteins, YWHAB and YWHAG. Interacts (probably when phosphorylated at Ser-171) with YWHAE. Interacts with calmodulin-dependent catalytic subunit PPP3CA/calcineurin A. Interaction with COP1 mediates nuclear export and degradation of CRTC2. (Microbial infection) Interaction with the human T-cell leukemia virus type 1 (HTLV-1) Tax protein is essential for optimal transcription activation by Tax. Phosphorylation/dephosphorylation states of Ser-171 are required for regulating transduction of CREB activity. CRTCs/TORCs are inactive when phosphorylated, and active when dephosphorylated at this site. This primary site of phosphorylation, is regulated by cAMP and calcium levels and is dependent on the phosphorylation of SIKs (SIK1 and SIK2) by LKB1. Following adenylyl cyclase activation, dephosphorylated at Ser-171 by PPP3CA/calcineurin A resulting in CRTC2 dissociation from 14-3-3 proteins and PPP3CA. Both insulin and AMPK increase this phosphorylation of CRTC2 while glucagon suppresses it. Phosphorylation at Ser-274 by MARK2 is induced under low glucose conditions and dephosphorylated in response to glucose influx. Phosphorylation at Ser-274 promotes interaction with 14-3-3 proteins and translocation to the cytoplasm. Post-translationally, asymmetric dimethylation of arginine resisues by PRMT6 enhances the association of CRTC2 with CREB on the promoters of gluconeogenic genes. Most abundantly expressed in the thymus. Present in both B and T-lymphocytes. Highly expressed in HEK293T cells and in insulinomas. High levels also in spleen, ovary, muscle and lung, with highest levels in muscle. Lower levels found in brain, colon, heart, kidney, prostate, small intestine and stomach. Weak expression in liver and pancreas.

Its subcellular location is the cytoplasm. It is found in the nucleus. Transcriptional coactivator for CREB1 which activates transcription through both consensus and variant cAMP response element (CRE) sites. Acts as a coactivator, in the SIK/TORC signaling pathway, being active when dephosphorylated and acts independently of CREB1 'Ser-133' phosphorylation. Enhances the interaction of CREB1 with TAF4. Regulates gluconeogenesis as a component of the LKB1/AMPK/TORC2 signaling pathway. Regulates the expression of specific genes such as the steroidogenic gene, StAR. Potent coactivator of PPARGC1A and inducer of mitochondrial biogenesis in muscle cells. Also coactivator for TAX activation of the human T-cell leukemia virus type 1 (HTLV-1) long terminal repeats (LTR). The chain is CREB-regulated transcription coactivator 2 (CRTC2) from Homo sapiens (Human).